A 211-amino-acid chain; its full sequence is Mitotic spindle assembly checkpoint protein MAD2B (211 aa).

The 191-residue stretch at Gln-13–Val-203 folds into the HORMA domain.

Homooligomer. Interacts with rev1. Interacts with rev3l. Interacts with fzr1 (in complex with the anaphase promoting complex APC). May interact with cdc20.

It localises to the nucleus. It is found in the cytoplasm. The protein resides in the cytoskeleton. The protein localises to the spindle. Adapter protein able to interact with different proteins and involved in different biological processes. Mediates the interaction between the error-prone DNA polymerase zeta catalytic subunit rev3l and the inserter polymerase rev1, thereby mediating the second polymerase switching in translesion DNA synthesis. Translesion DNA synthesis releases the replication blockade of replicative polymerases, stalled in presence of DNA lesions. May also play a role in signal transduction in response to DNA damage. May regulate the activation of the anaphase promoting complex APC thereby regulating progression through the cell cycle. Through transcriptional regulation may play a role in epithelial-mesenchymal transdifferentiation. In terms of biological role, inhibits the fzr1-APC complex activity during mitosis. Plays a role in progression of mitosis. This Xenopus laevis (African clawed frog) protein is Mitotic spindle assembly checkpoint protein MAD2B (mad2l2).